Reading from the N-terminus, the 86-residue chain is Large ribosomal subunit protein uL23c (86 aa).

It belongs to the universal ribosomal protein uL23 family. Part of the 50S ribosomal subunit.

It localises to the plastid. Its subcellular location is the chloroplast. In terms of biological role, binds to 23S rRNA. This is Large ribosomal subunit protein uL23c (rpl23) from Chlorella vulgaris (Green alga).